Reading from the N-terminus, the 225-residue chain is MAEEPTYTTEQVDELIHAGLGTVDFFLSRPIDAQSSLGKGSIPPGVTAVLTSAAETKSKPVAAGPVKPRRKKVISNTTPYTIADNIPPEKLPINTPIPNPLLPLARPHGKMTDIDIVTGNITEGSYKGVELAKLGKQTLLTRFTSNEPVSSAGSAQDPNFKRGGANRERARGNHRREWSIAWVGDQVKVFEWCNPRCAPVTASARKFTCTCGSCPSICGECEGDH.

A compositionally biased stretch (polar residues) spans 145–157; the sequence is SNEPVSSAGSAQD. Positions 145-173 are disordered; the sequence is SNEPVSSAGSAQDPNFKRGGANRERARGN. Zn(2+)-binding residues include histidine 174, cysteine 193, cysteine 197, cysteine 209, cysteine 211, cysteine 214, cysteine 218, and cysteine 221.

Belongs to the paramyxoviruses V protein family. In terms of assembly, interacts with host IFIH1/MDA5 and DHX58/LGP2. Forms with host DDB1, CUL4A, STAT1 and STAT2 the HPIV2 virus V-dependent complex (VDC); this complex targets host STAT2 to proteasomal degradation.

The protein localises to the host nucleus. Plays an essential role in the inhibition of host immune response. Prevents the establishment of cellular antiviral state by blocking interferon-alpha/beta (IFN-alpha/beta) production and signaling pathway. Interacts with host IFIH1/MDA5 and DHX58/LGP2 to inhibit the transduction pathway involved in the activation of IFN-beta promoter, thus protecting the virus against cell antiviral state. Efficiently blocks type I IFN signaling following infection by targeting host STAT2 for proteasomal degradation. Also plays a role in viral growth by promoting host RhoA-induced F-actin formation. This Homo sapiens (Human) protein is Non-structural protein V (P/V).